Here is a 246-residue protein sequence, read N- to C-terminus: uncharacterized protein (246 aa).

Belongs to the BtpA family.

This is an uncharacterized protein from Archaeoglobus fulgidus (strain ATCC 49558 / DSM 4304 / JCM 9628 / NBRC 100126 / VC-16).